Reading from the N-terminus, the 304-residue chain is N-acetyl-D-glucosamine kinase (304 aa).

ATP-binding positions include 4 to 11 and 133 to 140; these read GFDMGGTK and GVGGGLIV. Positions 157, 177, 179, and 184 each coordinate Zn(2+).

Belongs to the ROK (NagC/XylR) family. NagK subfamily.

It catalyses the reaction N-acetyl-D-glucosamine + ATP = N-acetyl-D-glucosamine 6-phosphate + ADP + H(+). Its pathway is cell wall biogenesis; peptidoglycan recycling. Functionally, catalyzes the phosphorylation of N-acetyl-D-glucosamine (GlcNAc) derived from cell-wall degradation, yielding GlcNAc-6-P. The protein is N-acetyl-D-glucosamine kinase of Yersinia pseudotuberculosis serotype IB (strain PB1/+).